The following is a 232-amino-acid chain: Orotidine 5'-phosphate decarboxylase (232 aa).

Residues Asp-11, Lys-33, 60-69 (DLKFHDIPNT), Thr-120, Arg-181, Gln-190, Gly-210, and Arg-211 each bind substrate. Catalysis depends on Lys-62, which acts as the Proton donor.

The protein belongs to the OMP decarboxylase family. Type 1 subfamily. Homodimer.

It catalyses the reaction orotidine 5'-phosphate + H(+) = UMP + CO2. It functions in the pathway pyrimidine metabolism; UMP biosynthesis via de novo pathway; UMP from orotate: step 2/2. In terms of biological role, catalyzes the decarboxylation of orotidine 5'-monophosphate (OMP) to uridine 5'-monophosphate (UMP). In Vibrio vulnificus (strain CMCP6), this protein is Orotidine 5'-phosphate decarboxylase.